We begin with the raw amino-acid sequence, 487 residues long: Arginine ADP-riboxanase CopC (487 aa).

Over residues 1–12 (MRVENHSPSLSK) the composition is skewed to polar residues. A disordered region spans residues 1–27 (MRVENHSPSLSKLNPPEAGSGDPTAIG). NAD(+) is bound by residues histidine 137, glutamine 138, serine 139, leucine 143, alanine 150, alanine 152, asparagine 154, and leucine 157. Residue histidine 137 participates in nicotinamide binding. ADP-D-ribose is bound by residues serine 139 and leucine 143. Alanine 152, asparagine 154, leucine 157, glycine 166, asparagine 167, threonine 168, and phenylalanine 183 together coordinate ADP-D-ribose. Asparagine 167 contributes to the NAD(+) binding site. Phenylalanine 183 is a binding site for NAD(+). Nicotinamide contacts are provided by phenylalanine 183, phenylalanine 184, histidine 202, and phenylalanine 207. Histidine 202 is an NAD(+) binding site. Residues phenylalanine 207 and aspartate 230 each coordinate ADP-D-ribose. 2 residues coordinate NAD(+): aspartate 230 and glutamate 325. Glutamate 325 contributes to the nicotinamide binding site. Glutamate 325 is a catalytic residue. ANK repeat units follow at residues 368 to 398 (DAVT…EAGD) and 444 to 476 (SGET…LLSE).

The protein belongs to the OspC family. Interacts with host calmodulin (CALM1, CALM2 and/or CALM3); specifically interacts with the apo form of calmodulin and calmodulin-binding is required to mediate arginine ADP-riboxanation of host caspases.

The protein resides in the secreted. It is found in the host cytoplasm. It carries out the reaction L-arginyl-[protein] + NAD(+) = ADP-riboxanated L-argininyl-[protein] + nicotinamide + NH4(+) + H(+). Its activity is regulated as follows. Interaction with host calmodulin (CALM1, CALM2 and/or CALM3) is required to mediate arginine ADP-riboxanation of host caspases. Functionally, ADP-riboxanase effector that inhibits host cell programmed cell death. Acts by mediating arginine ADP-riboxanation of host caspases (CASP3, CASP7, CASP8 and CASP9), blocking their processing and activation. ADP-riboxanation of host apoptotic caspases (CASP3, CASP7, CASP8 and CASP9) prevents their activation, thereby inhibiting host cell apoptosis. ADP-riboxanation of host CASP8 also inhibits host cell necroptosis. ADP-riboxanation of host CASP3 also abolishes pyroptosis by preventing its ability to cleave GSDME. May also able to inactivate CASP4/CASP11, blocking inhibiting LPS-induced pyroptosis; however this activity is unsure in vivo. ADP-riboxanation takes place in several steps: CopC first binds host caspases and NAD(+); NAD(+) is hydrolyzed to nicotinamide and ADP-D-ribose. CopC then transfers the ADP-D-ribose to the modified arginine of caspases and forms the ADP-D-ribose-deacylization on arginine, leading to deamination to remove one N-omega group on target arginine. The polypeptide is Arginine ADP-riboxanase CopC (Chromobacterium violaceum (strain ATCC 12472 / DSM 30191 / JCM 1249 / CCUG 213 / NBRC 12614 / NCIMB 9131 / NCTC 9757 / MK)).